The chain runs to 432 residues: Glutamyl-tRNA reductase (432 aa).

Substrate contacts are provided by residues 49–52 (TCNR), serine 101, 106–108 (ESQ), and glutamine 112. The active-site Nucleophile is cysteine 50. NADP(+) is bound at residue 181–186 (GTGETI). The segment at 410-432 (KPGYHHPTLQTTIVKTDETDPAS) is disordered.

It belongs to the glutamyl-tRNA reductase family. As to quaternary structure, homodimer.

The catalysed reaction is (S)-4-amino-5-oxopentanoate + tRNA(Glu) + NADP(+) = L-glutamyl-tRNA(Glu) + NADPH + H(+). It participates in porphyrin-containing compound metabolism; protoporphyrin-IX biosynthesis; 5-aminolevulinate from L-glutamyl-tRNA(Glu): step 1/2. In terms of biological role, catalyzes the NADPH-dependent reduction of glutamyl-tRNA(Glu) to glutamate 1-semialdehyde (GSA). The chain is Glutamyl-tRNA reductase from Xylella fastidiosa (strain 9a5c).